We begin with the raw amino-acid sequence, 146 residues long: Protein ADM2 (146 aa).

An N-terminal signal peptide occupies residues 1–25 (MAQLLMVTVTFGCISLLYLLPGTLS). A propeptide spanning residues 26–96 (GSLGKGLRPR…HPGPQRHVGS (71 aa)) is cleaved from the precursor. The segment at 29–99 (GKGLRPREPP…PQRHVGSRRP (71 aa)) is disordered. Cys108 and Cys113 form a disulfide bridge. The residue at position 145 (Tyr145) is a Tyrosine amide.

Belongs to the adrenomedullin family. In terms of tissue distribution, expression was restricted to the intermediate and anterior lobes of the pituitary.

Its subcellular location is the secreted. Functionally, intermedin/ADM2 is a peptide hormone that plays a role as physiological regulator of gastrointestinal and cardiovascular bioactivities mediated by the CALCRL-RAMPs receptor complexes. Activates the cAMP-dependent pathway through interaction with CALCRL-RAMP3 receptor complex. This Rattus norvegicus (Rat) protein is Protein ADM2.